Consider the following 229-residue polypeptide: Protein-L-isoaspartate O-methyltransferase (229 aa).

Residue S65 is part of the active site.

It belongs to the methyltransferase superfamily. L-isoaspartyl/D-aspartyl protein methyltransferase family.

It localises to the cytoplasm. It carries out the reaction [protein]-L-isoaspartate + S-adenosyl-L-methionine = [protein]-L-isoaspartate alpha-methyl ester + S-adenosyl-L-homocysteine. Functionally, catalyzes the methyl esterification of L-isoaspartyl residues in peptides and proteins that result from spontaneous decomposition of normal L-aspartyl and L-asparaginyl residues. It plays a role in the repair and/or degradation of damaged proteins. In Chlorobium phaeovibrioides (strain DSM 265 / 1930) (Prosthecochloris vibrioformis (strain DSM 265)), this protein is Protein-L-isoaspartate O-methyltransferase.